A 153-amino-acid polypeptide reads, in one-letter code: NADPH-dependent 7-cyano-7-deazaguanine reductase (153 aa).

The interval 1 to 26 (MVKIHDGASQLGANVAAPRSPEEATL) is disordered. Cys51 acts as the Thioimide intermediate in catalysis. Asp58 functions as the Proton donor in the catalytic mechanism. Substrate contacts are provided by residues 73–75 (VES) and 92–93 (HE).

The protein belongs to the GTP cyclohydrolase I family. QueF type 1 subfamily.

The protein localises to the cytoplasm. It carries out the reaction 7-aminomethyl-7-carbaguanine + 2 NADP(+) = 7-cyano-7-deazaguanine + 2 NADPH + 3 H(+). The protein operates within tRNA modification; tRNA-queuosine biosynthesis. Its function is as follows. Catalyzes the NADPH-dependent reduction of 7-cyano-7-deazaguanine (preQ0) to 7-aminomethyl-7-deazaguanine (preQ1). This Methylocella silvestris (strain DSM 15510 / CIP 108128 / LMG 27833 / NCIMB 13906 / BL2) protein is NADPH-dependent 7-cyano-7-deazaguanine reductase.